The following is a 500-amino-acid chain: Aspartyl/glutamyl-tRNA(Asn/Gln) amidotransferase subunit B (500 aa).

This sequence belongs to the GatB/GatE family. GatB subfamily. In terms of assembly, heterotrimer of A, B and C subunits.

The catalysed reaction is L-glutamyl-tRNA(Gln) + L-glutamine + ATP + H2O = L-glutaminyl-tRNA(Gln) + L-glutamate + ADP + phosphate + H(+). It carries out the reaction L-aspartyl-tRNA(Asn) + L-glutamine + ATP + H2O = L-asparaginyl-tRNA(Asn) + L-glutamate + ADP + phosphate + 2 H(+). Its function is as follows. Allows the formation of correctly charged Asn-tRNA(Asn) or Gln-tRNA(Gln) through the transamidation of misacylated Asp-tRNA(Asn) or Glu-tRNA(Gln) in organisms which lack either or both of asparaginyl-tRNA or glutaminyl-tRNA synthetases. The reaction takes place in the presence of glutamine and ATP through an activated phospho-Asp-tRNA(Asn) or phospho-Glu-tRNA(Gln). This chain is Aspartyl/glutamyl-tRNA(Asn/Gln) amidotransferase subunit B, found in Rhizobium leguminosarum bv. trifolii (strain WSM2304).